The sequence spans 165 residues: Ribosome maturation factor RimM (165 aa).

The region spanning 94–165 (EDEFYIADLN…YVVLNYQREI (72 aa)) is the PRC barrel domain.

Belongs to the RimM family. Binds ribosomal protein uS19.

It localises to the cytoplasm. Its function is as follows. An accessory protein needed during the final step in the assembly of 30S ribosomal subunit, possibly for assembly of the head region. Essential for efficient processing of 16S rRNA. May be needed both before and after RbfA during the maturation of 16S rRNA. It has affinity for free ribosomal 30S subunits but not for 70S ribosomes. This chain is Ribosome maturation factor RimM, found in Rickettsia felis (strain ATCC VR-1525 / URRWXCal2) (Rickettsia azadi).